The following is a 311-amino-acid chain: Methionyl-tRNA formyltransferase (311 aa).

109–112 contributes to the (6S)-5,6,7,8-tetrahydrofolate binding site; the sequence is SLLP.

It belongs to the Fmt family.

The catalysed reaction is L-methionyl-tRNA(fMet) + (6R)-10-formyltetrahydrofolate = N-formyl-L-methionyl-tRNA(fMet) + (6S)-5,6,7,8-tetrahydrofolate + H(+). Attaches a formyl group to the free amino group of methionyl-tRNA(fMet). The formyl group appears to play a dual role in the initiator identity of N-formylmethionyl-tRNA by promoting its recognition by IF2 and preventing the misappropriation of this tRNA by the elongation apparatus. This is Methionyl-tRNA formyltransferase from Acetivibrio thermocellus (strain ATCC 27405 / DSM 1237 / JCM 9322 / NBRC 103400 / NCIMB 10682 / NRRL B-4536 / VPI 7372) (Clostridium thermocellum).